Consider the following 500-residue polypeptide: Probable cytosol aminopeptidase (500 aa).

2 residues coordinate Mn(2+): lysine 264 and aspartate 269. The active site involves lysine 276. The Mn(2+) site is built by aspartate 287, aspartate 346, and glutamate 348. Arginine 350 is an active-site residue.

This sequence belongs to the peptidase M17 family. Mn(2+) serves as cofactor.

The protein resides in the cytoplasm. It catalyses the reaction Release of an N-terminal amino acid, Xaa-|-Yaa-, in which Xaa is preferably Leu, but may be other amino acids including Pro although not Arg or Lys, and Yaa may be Pro. Amino acid amides and methyl esters are also readily hydrolyzed, but rates on arylamides are exceedingly low.. The enzyme catalyses Release of an N-terminal amino acid, preferentially leucine, but not glutamic or aspartic acids.. Its function is as follows. Presumably involved in the processing and regular turnover of intracellular proteins. Catalyzes the removal of unsubstituted N-terminal amino acids from various peptides. This is Probable cytosol aminopeptidase from Rhodopseudomonas palustris (strain TIE-1).